Reading from the N-terminus, the 169-residue chain is NADH-quinone oxidoreductase subunit B (169 aa).

The [4Fe-4S] cluster site is built by Cys-42, Cys-43, Cys-107, and Cys-136.

This sequence belongs to the complex I 20 kDa subunit family. In terms of assembly, NDH-1 is composed of 14 different subunits. Subunits NuoB, C, D, E, F, and G constitute the peripheral sector of the complex. [4Fe-4S] cluster serves as cofactor.

Its subcellular location is the cell inner membrane. It carries out the reaction a quinone + NADH + 5 H(+)(in) = a quinol + NAD(+) + 4 H(+)(out). Its function is as follows. NDH-1 shuttles electrons from NADH, via FMN and iron-sulfur (Fe-S) centers, to quinones in the respiratory chain. The immediate electron acceptor for the enzyme in this species is believed to be ubiquinone. Couples the redox reaction to proton translocation (for every two electrons transferred, four hydrogen ions are translocated across the cytoplasmic membrane), and thus conserves the redox energy in a proton gradient. In Wolinella succinogenes (strain ATCC 29543 / DSM 1740 / CCUG 13145 / JCM 31913 / LMG 7466 / NCTC 11488 / FDC 602W) (Vibrio succinogenes), this protein is NADH-quinone oxidoreductase subunit B.